The primary structure comprises 245 residues: Gas vesicle protein F (245 aa).

This sequence belongs to the gas vesicle GvpF/GvpL family. Binds GvpA.

The protein localises to the gas vesicle. Functionally, a minor component of the gas vesicle, may be involved in preventing GvpA aggregation during gas vesicle nucleation. Gas vesicles (GV) are hollow, gas filled proteinaceous nanostructures. During planktonic growth they allow positioning of the organism at a favorable depth for light or nutrient acquisition. The sequence is that of Gas vesicle protein F from Dolichospermum flosaquae (Anabaena flos-aquae).